A 414-amino-acid chain; its full sequence is Carboxynorspermidine synthase (414 aa).

This sequence belongs to the saccharopine dehydrogenase family. Carboxynorspermidine synthase subfamily. Homodimer.

The catalysed reaction is carboxynorspermidine + NADP(+) + H2O = L-aspartate 4-semialdehyde + propane-1,3-diamine + NADPH + H(+). It carries out the reaction carboxyspermidine + NADP(+) + H2O = L-aspartate 4-semialdehyde + putrescine + NADPH + H(+). Activated by dithiothreitol and inhibited by SH-reactive compounds. In terms of biological role, involved in norspermidine biosynthesis. Catalyzes the synthesis of carboxynorspermidine from L-aspartate 4-semialdehyde and 1,3-diaminopropane. Is also slightly active with putrescine as a substrate. The chain is Carboxynorspermidine synthase from Vibrio alginolyticus (strain ATCC 17749 / DSM 2171 / NBRC 15630 / NCIMB 1903 / NCTC 12160 / XII-53).